We begin with the raw amino-acid sequence, 408 residues long: Histidine--tRNA ligase (408 aa).

This sequence belongs to the class-II aminoacyl-tRNA synthetase family.

The protein resides in the cytoplasm. The catalysed reaction is tRNA(His) + L-histidine + ATP = L-histidyl-tRNA(His) + AMP + diphosphate + H(+). The sequence is that of Histidine--tRNA ligase from Methanospirillum hungatei JF-1 (strain ATCC 27890 / DSM 864 / NBRC 100397 / JF-1).